Here is a 572-residue protein sequence, read N- to C-terminus: Moesin/ezrin/radixin homolog 1 (572 aa).

An FERM domain is found at 1 to 291; the sequence is MNVRVTTMDA…GNHELYMRRR (291 aa). Positions 456-491 are disordered; the sequence is TTTPSHHHVEEEEEMDNEEELVNGENGNQDFSKDFD. Residues 466-477 are compositionally biased toward acidic residues; sequence EEEEMDNEEELV. At Thr553 the chain carries Phosphothreonine.

Interacts with cytoskeletal actin.

It is found in the cell junction. Its subcellular location is the adherens junction. The protein resides in the cell projection. The protein localises to the microvillus. It localises to the rhabdomere. It is found in the cell membrane. Its subcellular location is the cytoplasm. The protein resides in the cytoskeleton. In terms of biological role, involved in connections of major cytoskeletal structures to the plasma membrane. The chain is Moesin/ezrin/radixin homolog 1 from Culex quinquefasciatus (Southern house mosquito).